We begin with the raw amino-acid sequence, 549 residues long: Cation/acetate symporter ActP (549 aa).

13 consecutive transmembrane segments (helical) span residues 33–53, 77–97, 103–123, 148–168, 183–203, 206–226, 262–282, 303–323, 355–375, 404–424, 428–448, 464–484, and 493–513; these read WQAI…TYWA, LAIA…ALVF, GLIY…LIAE, ILSA…QMVG, IAVV…GMLA, WVQI…AFMV, ISAL…PHIL, GFMG…IMLV, LFLG…VAGL, VSKI…MLFE, IAFM…PIIL, GGWL…TIWV, and IFPY…GIWF.

This sequence belongs to the sodium:solute symporter (SSF) (TC 2.A.21) family.

It localises to the cell inner membrane. In terms of biological role, transports acetate. The protein is Cation/acetate symporter ActP of Shigella boydii serotype 4 (strain Sb227).